Reading from the N-terminus, the 351-residue chain is Phosphoribosylformylglycinamidine cyclo-ligase (351 aa).

This sequence belongs to the AIR synthase family.

It is found in the cytoplasm. The catalysed reaction is 2-formamido-N(1)-(5-O-phospho-beta-D-ribosyl)acetamidine + ATP = 5-amino-1-(5-phospho-beta-D-ribosyl)imidazole + ADP + phosphate + H(+). It participates in purine metabolism; IMP biosynthesis via de novo pathway; 5-amino-1-(5-phospho-D-ribosyl)imidazole from N(2)-formyl-N(1)-(5-phospho-D-ribosyl)glycinamide: step 2/2. This is Phosphoribosylformylglycinamidine cyclo-ligase from Idiomarina loihiensis (strain ATCC BAA-735 / DSM 15497 / L2-TR).